The following is a 193-amino-acid chain: Dual-action ribosomal maturation protein DarP (193 aa).

The protein belongs to the DarP family.

It is found in the cytoplasm. In terms of biological role, member of a network of 50S ribosomal subunit biogenesis factors which assembles along the 30S-50S interface, preventing incorrect 23S rRNA structures from forming. Promotes peptidyl transferase center (PTC) maturation. This Vibrio cholerae serotype O1 (strain ATCC 39315 / El Tor Inaba N16961) protein is Dual-action ribosomal maturation protein DarP.